Here is a 314-residue protein sequence, read N- to C-terminus: Homoserine kinase (314 aa).

An ATP-binding site is contributed by 96-106 (PIGSGLGSSAC).

Belongs to the GHMP kinase family. Homoserine kinase subfamily.

Its subcellular location is the cytoplasm. The catalysed reaction is L-homoserine + ATP = O-phospho-L-homoserine + ADP + H(+). It participates in amino-acid biosynthesis; L-threonine biosynthesis; L-threonine from L-aspartate: step 4/5. Catalyzes the ATP-dependent phosphorylation of L-homoserine to L-homoserine phosphate. The protein is Homoserine kinase of Histophilus somni (strain 129Pt) (Haemophilus somnus).